Reading from the N-terminus, the 138-residue chain is RuBisCO chaperone RbcX (138 aa).

Residues 118-138 are disordered; the sequence is VDNFPSETSNGESNNNDSPPS. The span at 122–138 shows a compositional bias: polar residues; the sequence is PSETSNGESNNNDSPPS.

This sequence belongs to the RbcX family. In terms of assembly, homodimer. Interacts with the exposed C-terminal peptide of RbcL via its central cleft, contacts a second RbcL monomer via its peripheral polar surface.

The protein resides in the carboxysome. It is found in the cytoplasm. Functionally, an RbcL-specific chaperone. The central cleft of the RbcX homodimer (RbcX2) binds the C-terminus of an RbcL monomer, stabilizing the C-terminus and probably preventing its reassociation with chaperonin GroEL-ES. At the same time the peripheral region of RbcX2 binds a second RbcL monomer, bridging the RbcL homodimers in the correct orientation. The RbcX2(2)-bound RbcL dimers then assemble into the RbcL8 core (RbcL8-(RbcX2)8). RbcS binding triggers the release of RbcX2. The protein is RuBisCO chaperone RbcX of Synechocystis sp. (strain ATCC 27184 / PCC 6803 / Kazusa).